The following is a 195-amino-acid chain: Probable nicotinate-nucleotide adenylyltransferase (195 aa).

This sequence belongs to the NadD family.

It carries out the reaction nicotinate beta-D-ribonucleotide + ATP + H(+) = deamido-NAD(+) + diphosphate. The protein operates within cofactor biosynthesis; NAD(+) biosynthesis; deamido-NAD(+) from nicotinate D-ribonucleotide: step 1/1. Catalyzes the reversible adenylation of nicotinate mononucleotide (NaMN) to nicotinic acid adenine dinucleotide (NaAD). This chain is Probable nicotinate-nucleotide adenylyltransferase, found in Bordetella petrii (strain ATCC BAA-461 / DSM 12804 / CCUG 43448).